A 166-amino-acid chain; its full sequence is Crossover junction endodeoxyribonuclease RuvC (166 aa).

Active-site residues include Asp-7, Glu-68, and Asp-141. Mg(2+) contacts are provided by Asp-7, Glu-68, and Asp-141.

Belongs to the RuvC family. In terms of assembly, homodimer which binds Holliday junction (HJ) DNA. The HJ becomes 2-fold symmetrical on binding to RuvC with unstacked arms; it has a different conformation from HJ DNA in complex with RuvA. In the full resolvosome a probable DNA-RuvA(4)-RuvB(12)-RuvC(2) complex forms which resolves the HJ. Requires Mg(2+) as cofactor.

The protein resides in the cytoplasm. It catalyses the reaction Endonucleolytic cleavage at a junction such as a reciprocal single-stranded crossover between two homologous DNA duplexes (Holliday junction).. Its function is as follows. The RuvA-RuvB-RuvC complex processes Holliday junction (HJ) DNA during genetic recombination and DNA repair. Endonuclease that resolves HJ intermediates. Cleaves cruciform DNA by making single-stranded nicks across the HJ at symmetrical positions within the homologous arms, yielding a 5'-phosphate and a 3'-hydroxyl group; requires a central core of homology in the junction. The consensus cleavage sequence is 5'-(A/T)TT(C/G)-3'. Cleavage occurs on the 3'-side of the TT dinucleotide at the point of strand exchange. HJ branch migration catalyzed by RuvA-RuvB allows RuvC to scan DNA until it finds its consensus sequence, where it cleaves and resolves the cruciform DNA. This is Crossover junction endodeoxyribonuclease RuvC from Caldicellulosiruptor saccharolyticus (strain ATCC 43494 / DSM 8903 / Tp8T 6331).